The sequence spans 396 residues: MSVRLVLAKGREKSLLRRHPWVFSGAVARMEGKANLGETIDIVDHQGKWLARGAYSPASQIRARVWTFDPSESIDIAFFTRRLQQAQKWRDWLAQKDGLDSYRLIAGESDGLPGITIDRFGNFLVLQLLSAGAEYQRAALISALQTLYPECAIYDRSDVAVRKKEGMELTQGPITGELPPALLPIEEHGMKLLVDIQHGHKTGYYLDQRDSRLATRRYVENKRVLNCFSYTGGFAVSALMGGCSQVVSVDTSHEALDIARQNVELNKLDLSKAEFVRDDVFKLLRTYRDRGEKFDVIVMDPPKFVENKSQLMGACRGYKDINMLAIQLLNEGGILLTFSCSGLMTSDLFQKIIADAAIDAGRDVQFIEQFRQAADHPVIATYPEGLYLKGFACRVM.

Positions 2 to 81 constitute a PUA domain; sequence SVRLVLAKGR…ESIDIAFFTR (80 aa).

The protein belongs to the methyltransferase superfamily. RlmI family.

Its subcellular location is the cytoplasm. It catalyses the reaction cytidine(1962) in 23S rRNA + S-adenosyl-L-methionine = 5-methylcytidine(1962) in 23S rRNA + S-adenosyl-L-homocysteine + H(+). In terms of biological role, specifically methylates the cytosine at position 1962 (m5C1962) of 23S rRNA. This is Ribosomal RNA large subunit methyltransferase I from Escherichia coli (strain UTI89 / UPEC).